Here is a 314-residue protein sequence, read N- to C-terminus: tRNA-cytidine(32) 2-sulfurtransferase (314 aa).

Positions Ser39–Ser44 match the PP-loop motif motif. [4Fe-4S] cluster is bound by residues Cys114, Cys117, and Cys205.

This sequence belongs to the TtcA family. As to quaternary structure, homodimer. Mg(2+) is required as a cofactor. The cofactor is [4Fe-4S] cluster.

The protein localises to the cytoplasm. The enzyme catalyses cytidine(32) in tRNA + S-sulfanyl-L-cysteinyl-[cysteine desulfurase] + AH2 + ATP = 2-thiocytidine(32) in tRNA + L-cysteinyl-[cysteine desulfurase] + A + AMP + diphosphate + H(+). Its pathway is tRNA modification. Functionally, catalyzes the ATP-dependent 2-thiolation of cytidine in position 32 of tRNA, to form 2-thiocytidine (s(2)C32). The sulfur atoms are provided by the cysteine/cysteine desulfurase (IscS) system. This chain is tRNA-cytidine(32) 2-sulfurtransferase, found in Cupriavidus metallidurans (strain ATCC 43123 / DSM 2839 / NBRC 102507 / CH34) (Ralstonia metallidurans).